The chain runs to 388 residues: 1-deoxy-D-xylulose 5-phosphate reductoisomerase (388 aa).

The NADPH site is built by Thr15, Gly16, Ser17, Ile18, and Asn127. Lys128 lines the 1-deoxy-D-xylulose 5-phosphate pocket. An NADPH-binding site is contributed by Glu129. Asp153 is a Mn(2+) binding site. 1-deoxy-D-xylulose 5-phosphate-binding residues include Ser154, Glu155, Ser179, and His202. Residue Glu155 coordinates Mn(2+). Gly208 lines the NADPH pocket. 1-deoxy-D-xylulose 5-phosphate contacts are provided by Ser215, Asn220, Lys221, and Glu224. Glu224 provides a ligand contact to Mn(2+).

It belongs to the DXR family. Mg(2+) serves as cofactor. It depends on Mn(2+) as a cofactor.

It catalyses the reaction 2-C-methyl-D-erythritol 4-phosphate + NADP(+) = 1-deoxy-D-xylulose 5-phosphate + NADPH + H(+). Its pathway is isoprenoid biosynthesis; isopentenyl diphosphate biosynthesis via DXP pathway; isopentenyl diphosphate from 1-deoxy-D-xylulose 5-phosphate: step 1/6. Catalyzes the NADPH-dependent rearrangement and reduction of 1-deoxy-D-xylulose-5-phosphate (DXP) to 2-C-methyl-D-erythritol 4-phosphate (MEP). The sequence is that of 1-deoxy-D-xylulose 5-phosphate reductoisomerase from Bacteroides fragilis (strain ATCC 25285 / DSM 2151 / CCUG 4856 / JCM 11019 / LMG 10263 / NCTC 9343 / Onslow / VPI 2553 / EN-2).